Reading from the N-terminus, the 145-residue chain is 3-dehydroquinate dehydratase (145 aa).

Tyrosine 23 acts as the Proton acceptor in catalysis. Substrate contacts are provided by asparagine 74, histidine 80, and aspartate 87. Histidine 100 serves as the catalytic Proton donor. Substrate contacts are provided by residues 101-102 and arginine 111; that span reads IS.

This sequence belongs to the type-II 3-dehydroquinase family. Homododecamer.

The catalysed reaction is 3-dehydroquinate = 3-dehydroshikimate + H2O. It participates in metabolic intermediate biosynthesis; chorismate biosynthesis; chorismate from D-erythrose 4-phosphate and phosphoenolpyruvate: step 3/7. In terms of biological role, catalyzes a trans-dehydration via an enolate intermediate. This chain is 3-dehydroquinate dehydratase, found in Dictyoglomus turgidum (strain DSM 6724 / Z-1310).